The chain runs to 259 residues: S-methyl-5'-thioadenosine phosphorylase (259 aa).

Residues serine 9 and 50-51 (RH) each bind phosphate. Residue methionine 175 participates in substrate binding. Position 176 (threonine 176) interacts with phosphate. 199-201 (DLD) contacts substrate.

It belongs to the PNP/MTAP phosphorylase family. MTAP subfamily. As to quaternary structure, homohexamer. Dimer of a homotrimer.

It carries out the reaction S-methyl-5'-thioadenosine + phosphate = 5-(methylsulfanyl)-alpha-D-ribose 1-phosphate + adenine. It functions in the pathway amino-acid biosynthesis; L-methionine biosynthesis via salvage pathway; S-methyl-5-thio-alpha-D-ribose 1-phosphate from S-methyl-5'-thioadenosine (phosphorylase route): step 1/1. Its function is as follows. Catalyzes the reversible phosphorylation of S-methyl-5'-thioadenosine (MTA) to adenine and 5-methylthioribose-1-phosphate. Involved in the breakdown of MTA, a major by-product of polyamine biosynthesis. Responsible for the first step in the methionine salvage pathway after MTA has been generated from S-adenosylmethionine. Has broad substrate specificity with 6-aminopurine nucleosides as preferred substrates. This Mycolicibacterium smegmatis (strain ATCC 700084 / mc(2)155) (Mycobacterium smegmatis) protein is S-methyl-5'-thioadenosine phosphorylase.